Consider the following 217-residue polypeptide: Serine acetyltransferase (217 aa).

This sequence belongs to the transferase hexapeptide repeat family.

It is found in the cytoplasm. It catalyses the reaction L-serine + acetyl-CoA = O-acetyl-L-serine + CoA. It participates in amino-acid biosynthesis; L-cysteine biosynthesis; L-cysteine from L-serine: step 1/2. Inhibited by cysteine. Functionally, catalyzes the acetylation of serine by acetyl-CoA to produce O-acetylserine (OAS). In Bacillus subtilis (strain 168), this protein is Serine acetyltransferase (cysE).